A 384-amino-acid polypeptide reads, in one-letter code: GDSL esterase/lipase At1g28670 (384 aa).

Residues 1–24 (MASSLKKLISSFLLVLYSTTIIVA) form the signal peptide. Residue Ser-42 is the Nucleophile of the active site. N-linked (GlcNAc...) asparagine glycosylation is found at Asn-105, Asn-138, and Asn-321. Residues Asp-346 and His-349 contribute to the active site.

Belongs to the 'GDSL' lipolytic enzyme family.

The protein resides in the secreted. This chain is GDSL esterase/lipase At1g28670, found in Arabidopsis thaliana (Mouse-ear cress).